Reading from the N-terminus, the 1140-residue chain is MKNVFQLLIPLFFHLFSLVSLQNIPVSTGTTRPKLKVGIAAAQKTQSASIGWNVCGGAVPLAIERLKQAGYVTNFDFEYYVEYTECDLASTVRTGINFLKNLEVDVIIGPPCSEAIRTMATLATLYKKPVLGWGFVSQADLSDMTRFPYLITVLPTSQTLGYAASKLLELYKWDKVALLYYKSEVNHCGGVMNDVETTFNDPSTYSIQIVLKAEIDASDNVTTNAVISSVKTRARIILWCAQLGSEKRDYMIKISQLGLDTDEYVHVLISMRSIGFGVQTFVGKTTFKLSGLTPVWESFSNVTDGLENVAKRGATNVLVIDLNSEVSDKAYLDYMQRNILNVVKLPPLNCSTVDCVSSTATGMGAYARHLFDVVYLYGIALTRVNSTDSAVYDDMSKLIPQFVTSFNGMTGLVAINQNLSRMPLYQLYGLDEQYEQTSLMNLSFADGTTVATISLAYSNESSAVWHFWGGIRPLATPICGFLGNSCPLPFWEQYGILIFVGAGVFLIMITTNLICFLFMIKNRREEQARINSEWQIPFVKLRELERKSKGTSKRSLQSAPSTITGESKVSTGSEFCENYEVKMFEKDMVLTMKFQYMNLNKADMDKFVKLRKLDHENLNKFIGLSIDSSQFISVTKLCSRGSLLDILYKGNFSMDFFFMYCIIKDVAEGMSYLHKSFLRLHGNLRSATCLVNDSWQVKLAEFGFDQLLEEITPTKRRLLWAAPEVLRGSLTVSQMDPSADVFSFAIIASEILTRKEAWDLKERKEGYDEIIYRVKKGGSFPIRPDIITDVPDVNPTLIALVKDCWAEAPEDRPTAENICEQLRDLMPKTKSNLMDHVFNMLEEYTSTLEVEVEERTKELTLEKKKADLLLSRMLPKQVAERLKAGQTVEPEGFDSVTVFFSDVVKFTILASKCTPFQVVNLLNDLYSNFDTIIEEHGVYKVESIGDGYLCVSGLPTRNGFNHIKQIVDMSLKFMDYCKNFKIPHLPRERVELRIGVNSGPCVAGVVGLSMPRYCLFGDTVNTASRMESNGKPSLIHLTSDAHLLLMKHFPHQYETNSRGEVIIKGKGVMETFWVLGRSGDIEPSISNRSTPPVTQERFTVRAPDTPEARSVSSHGSRPSSNHNNNNDPLYRQYKMDTLKI.

The signal sequence occupies residues 1-21 (MKNVFQLLIPLFFHLFSLVSL). Topologically, residues 22 to 495 (QNIPVSTGTT…CPLPFWEQYG (474 aa)) are extracellular. N-linked (GlcNAc...) asparagine glycosylation is found at Asn-220, Asn-301, Asn-349, Asn-385, Asn-418, Asn-441, and Asn-459. Residues 496 to 516 (ILIFVGAGVFLIMITTNLICF) traverse the membrane as a helical segment. Over 517-1140 (LFMIKNRREE…RQYKMDTLKI (624 aa)) the chain is Cytoplasmic. Residues 538–826 (FVKLRELERK…NICEQLRDLM (289 aa)) form the Protein kinase domain. Residues 544–552 (LERKSKGTS) and Lys-582 contribute to the ATP site. A Guanylate cyclase domain is found at 897–1027 (TVFFSDVVKF…DTVNTASRME (131 aa)). Residues 1083 to 1140 (PSISNRSTPPVTQERFTVRAPDTPEARSVSSHGSRPSSNHNNNNDPLYRQYKMDTLKI) form a disordered region. The segment covering 1084–1097 (SISNRSTPPVTQER) has biased composition (polar residues). A compositionally biased stretch (low complexity) spans 1109–1126 (RSVSSHGSRPSSNHNNNN).

This sequence belongs to the adenylyl cyclase class-4/guanylyl cyclase family. Expressed asymmetrically in ASE right (ASER) sensory neuron and bilaterally in ASI sensory neurons. Expressed in PVT interneuron.

It is found in the cell membrane. The catalysed reaction is GTP = 3',5'-cyclic GMP + diphosphate. Its function is as follows. Guanylate cyclase involved in the production of the second messenger cGMP. This Caenorhabditis elegans protein is Receptor-type guanylate cyclase gcy-3.